The sequence spans 379 residues: Probable peptidoglycan glycosyltransferase FtsW (379 aa).

The Cytoplasmic portion of the chain corresponds to 1–15 (MHKTEAQTYLLYDRT). A helical membrane pass occupies residues 16-36 (LLLLTMGLVGIGLVMVISTSM). The Periplasmic segment spans residues 37 to 52 (PIGVRLSEDPFYFARR). The chain crosses the membrane as a helical span at residues 53-73 (YAFYLGLAVVLSLVTLGIPMA). Over 74–79 (SWQRGS) the chain is Cytoplasmic. Residues 80–100 (SLILLITLIMLLLVLIAGQSV) form a helical membrane-spanning segment. The Periplasmic segment spans residues 101–113 (NGAVRWLALGPWR). A helical transmembrane segment spans residues 114-133 (IQPAELSKLALFCYLASYLV). At 134-139 (RKAEEV) the chain is on the cytoplasmic side. The helical transmembrane segment at 140–162 (RTNFWGFCKPIGVMVLLAILLLA) threads the bilayer. At 163-165 (QPD) the chain is on the periplasmic side. Residues 166 to 183 (LGTVLVLFITTLAMLFLA) form a helical membrane-spanning segment. Topologically, residues 184–186 (EAK) are cytoplasmic. A helical membrane pass occupies residues 187–207 (IWQFLPIIGTGILAVMLLIIA). Residues 208–269 (KPYRRRRVTS…TEAHTDFICS (62 aa)) lie on the Periplasmic side of the membrane. A helical transmembrane segment spans residues 270 to 290 (ILGEELGYFGVLLALLMVFLV). Residues 291-301 (AFRAMSIGRKA) are Cytoplasmic-facing. A helical transmembrane segment spans residues 302 to 322 (LAINQIFSGFLACSIGIWFSF). Residues 323–342 (QTMVNVGAAAGMLPTKGLTL) lie on the Periplasmic side of the membrane. The helical transmembrane segment at 343-363 (PFISYGGSSMLIMLTAIVLLI) threads the bilayer. Topologically, residues 364 to 379 (RIDFETRLAKLQAFVR) are cytoplasmic.

It belongs to the SEDS family. FtsW subfamily.

It is found in the cell inner membrane. The enzyme catalyses [GlcNAc-(1-&gt;4)-Mur2Ac(oyl-L-Ala-gamma-D-Glu-L-Lys-D-Ala-D-Ala)](n)-di-trans,octa-cis-undecaprenyl diphosphate + beta-D-GlcNAc-(1-&gt;4)-Mur2Ac(oyl-L-Ala-gamma-D-Glu-L-Lys-D-Ala-D-Ala)-di-trans,octa-cis-undecaprenyl diphosphate = [GlcNAc-(1-&gt;4)-Mur2Ac(oyl-L-Ala-gamma-D-Glu-L-Lys-D-Ala-D-Ala)](n+1)-di-trans,octa-cis-undecaprenyl diphosphate + di-trans,octa-cis-undecaprenyl diphosphate + H(+). Its pathway is cell wall biogenesis; peptidoglycan biosynthesis. In terms of biological role, peptidoglycan polymerase that is essential for cell division. This Moranella endobia (strain PCIT) protein is Probable peptidoglycan glycosyltransferase FtsW.